The sequence spans 449 residues: Putative F-box/LRR-repeat protein At3g44090 (449 aa).

Residues 23–77 (LASMDCLPDDLLVQILYFLPTKEAISTSLLSKRWRTLYSLVHNLDLDDYIFWHHE) enclose the F-box domain. 6 LRR repeats span residues 133–163 (YYNLQKDSLWQFGFPYKVFTSTKLVKLSLGT), 186–212 (YIWFEDNQLSDVFLAACPALEDLTIHH), 214–231 (FRPFLISSKNLKKLSVTI), 247–278 (TPNVVDLYYSDFPRPIAPHCHLDSLAKVELDL), 286–311 (RQVQNDADVKNLISEIRNVKTLHLTY), and 320–345 (SKKRDWKVLPLLLERSPNLKTLVLSG).

The sequence is that of Putative F-box/LRR-repeat protein At3g44090 from Arabidopsis thaliana (Mouse-ear cress).